Here is a 114-residue protein sequence, read N- to C-terminus: T cell receptor beta variable 28 (114 aa).

Positions Met1–Ser26 are cleaved as a signal peptide. One can recognise an Ig-like domain in the interval Ser27–Leu114. Cys42 and Cys110 are joined by a disulfide. The N-linked (GlcNAc...) asparagine glycan is linked to Asn103.

Alpha-beta TR is a heterodimer composed of an alpha and beta chain; disulfide-linked. The alpha-beta TR is associated with the transmembrane signaling CD3 coreceptor proteins to form the TR-CD3 (TcR or TCR). The assembly of alpha-beta TR heterodimers with CD3 occurs in the endoplasmic reticulum where a single alpha-beta TR heterodimer associates with one CD3D-CD3E heterodimer, one CD3G-CD3E heterodimer and one CD247 homodimer forming a stable octameric structure. CD3D-CD3E and CD3G-CD3E heterodimers preferentially associate with TR alpha and TR beta chains, respectively. The association of the CD247 homodimer is the last step of TcR assembly in the endoplasmic reticulum and is required for transport to the cell surface.

It is found in the cell membrane. Its function is as follows. V region of the variable domain of T cell receptor (TR) beta chain that participates in the antigen recognition. Alpha-beta T cell receptors are antigen specific receptors which are essential to the immune response and are present on the cell surface of T lymphocytes. Recognize peptide-major histocompatibility (MH) (pMH) complexes that are displayed by antigen presenting cells (APC), a prerequisite for efficient T cell adaptive immunity against pathogens. Binding of alpha-beta TR to pMH complex initiates TR-CD3 clustering on the cell surface and intracellular activation of LCK that phosphorylates the ITAM motifs of CD3G, CD3D, CD3E and CD247 enabling the recruitment of ZAP70. In turn ZAP70 phosphorylates LAT, which recruits numerous signaling molecules to form the LAT signalosome. The LAT signalosome propagates signal branching to three major signaling pathways, the calcium, the mitogen-activated protein kinase (MAPK) kinase and the nuclear factor NF-kappa-B (NF-kB) pathways, leading to the mobilization of transcription factors that are critical for gene expression and essential for T cell growth and differentiation. The T cell repertoire is generated in the thymus, by V-(D)-J rearrangement. This repertoire is then shaped by intrathymic selection events to generate a peripheral T cell pool of self-MH restricted, non-autoaggressive T cells. Post-thymic interaction of alpha-beta TR with the pMH complexes shapes TR structural and functional avidity. The sequence is that of T cell receptor beta variable 28 from Homo sapiens (Human).